A 196-amino-acid polypeptide reads, in one-letter code: Cytochrome c biogenesis ATP-binding export protein CcmA (196 aa).

Residues 2–195 form the ABC transporter domain; sequence LSFHQLKFNI…HIKSAQILQL (194 aa). 34-41 lines the ATP pocket; that stretch reads GANGCGKT.

Belongs to the ABC transporter superfamily. CcmA exporter (TC 3.A.1.107) family. As to quaternary structure, the complex is composed of two ATP-binding proteins (CcmA) and two transmembrane proteins (CcmB).

Its subcellular location is the cell inner membrane. The catalysed reaction is heme b(in) + ATP + H2O = heme b(out) + ADP + phosphate + H(+). Functionally, part of the ABC transporter complex CcmAB involved in the biogenesis of c-type cytochromes; once thought to export heme, this seems not to be the case, but its exact role is uncertain. Responsible for energy coupling to the transport system. This chain is Cytochrome c biogenesis ATP-binding export protein CcmA, found in Rickettsia bellii (strain RML369-C).